Here is a 239-residue protein sequence, read N- to C-terminus: tRNA (guanine-N(7)-)-methyltransferase (239 aa).

4 residues coordinate S-adenosyl-L-methionine: E69, E94, D121, and D144. The active site involves D144. Residues K148, D180, and 217 to 220 (TKFE) each bind substrate.

Belongs to the class I-like SAM-binding methyltransferase superfamily. TrmB family.

The enzyme catalyses guanosine(46) in tRNA + S-adenosyl-L-methionine = N(7)-methylguanosine(46) in tRNA + S-adenosyl-L-homocysteine. Its pathway is tRNA modification; N(7)-methylguanine-tRNA biosynthesis. Functionally, catalyzes the formation of N(7)-methylguanine at position 46 (m7G46) in tRNA. In Alcanivorax borkumensis (strain ATCC 700651 / DSM 11573 / NCIMB 13689 / SK2), this protein is tRNA (guanine-N(7)-)-methyltransferase.